The sequence spans 251 residues: Cell division protein ZapD (251 aa).

The protein belongs to the ZapD family. In terms of assembly, interacts with FtsZ.

The protein localises to the cytoplasm. Its function is as follows. Cell division factor that enhances FtsZ-ring assembly. Directly interacts with FtsZ and promotes bundling of FtsZ protofilaments, with a reduction in FtsZ GTPase activity. The chain is Cell division protein ZapD from Burkholderia mallei (strain NCTC 10247).